A 119-amino-acid chain; its full sequence is Holo-[acyl-carrier-protein] synthase (119 aa).

D5 and E51 together coordinate Mg(2+).

This sequence belongs to the P-Pant transferase superfamily. AcpS family. Mg(2+) serves as cofactor.

The protein localises to the cytoplasm. It carries out the reaction apo-[ACP] + CoA = holo-[ACP] + adenosine 3',5'-bisphosphate + H(+). In terms of biological role, transfers the 4'-phosphopantetheine moiety from coenzyme A to a Ser of acyl-carrier-protein. The sequence is that of Holo-[acyl-carrier-protein] synthase from Helicobacter pylori (strain G27).